The sequence spans 525 residues: GMP synthase [glutamine-hydrolyzing] (525 aa).

The region spanning Arg9 to Leu207 is the Glutamine amidotransferase type-1 domain. The Nucleophile role is filled by Cys86. Residues His181 and Glu183 contribute to the active site. One can recognise a GMPS ATP-PPase domain in the interval Trp208–Arg400. Ser235–Ser241 contributes to the ATP binding site.

In terms of assembly, homodimer.

It catalyses the reaction XMP + L-glutamine + ATP + H2O = GMP + L-glutamate + AMP + diphosphate + 2 H(+). It participates in purine metabolism; GMP biosynthesis; GMP from XMP (L-Gln route): step 1/1. In terms of biological role, catalyzes the synthesis of GMP from XMP. This is GMP synthase [glutamine-hydrolyzing] from Pseudomonas aeruginosa (strain LESB58).